The chain runs to 554 residues: Phenylalanine--tRNA ligase beta subunit (554 aa).

Residues 276 to 351 (LTPKSRMISV…INYGYEKFEG (76 aa)) enclose the B5 domain. Residues D329, D335, E338, and E339 each contribute to the Mg(2+) site.

This sequence belongs to the phenylalanyl-tRNA synthetase beta subunit family. Type 2 subfamily. Tetramer of two alpha and two beta subunits. The cofactor is Mg(2+).

It is found in the cytoplasm. It carries out the reaction tRNA(Phe) + L-phenylalanine + ATP = L-phenylalanyl-tRNA(Phe) + AMP + diphosphate + H(+). This chain is Phenylalanine--tRNA ligase beta subunit, found in Methanococcus maripaludis (strain C6 / ATCC BAA-1332).